The following is a 161-amino-acid chain: Large ribosomal subunit protein uL15 (161 aa).

Residues 1–43 (MKLSDIADNAGARKKRMRVGRGIGSGKGKTSGRGGKGQTARSG) are disordered. The segment covering 21 to 37 (RGIGSGKGKTSGRGGKG) has biased composition (gly residues).

This sequence belongs to the universal ribosomal protein uL15 family. In terms of assembly, part of the 50S ribosomal subunit.

Its function is as follows. Binds to the 23S rRNA. The polypeptide is Large ribosomal subunit protein uL15 (Bradyrhizobium sp. (strain BTAi1 / ATCC BAA-1182)).